Consider the following 253-residue polypeptide: 5'/3'-nucleotidase SurE (253 aa).

Residues Asp-8, Asp-9, Ser-39, and Asn-92 each coordinate a divalent metal cation.

This sequence belongs to the SurE nucleotidase family. It depends on a divalent metal cation as a cofactor.

Its subcellular location is the cytoplasm. The catalysed reaction is a ribonucleoside 5'-phosphate + H2O = a ribonucleoside + phosphate. It catalyses the reaction a ribonucleoside 3'-phosphate + H2O = a ribonucleoside + phosphate. It carries out the reaction [phosphate](n) + H2O = [phosphate](n-1) + phosphate + H(+). Functionally, nucleotidase with a broad substrate specificity as it can dephosphorylate various ribo- and deoxyribonucleoside 5'-monophosphates and ribonucleoside 3'-monophosphates with highest affinity to 3'-AMP. Also hydrolyzes polyphosphate (exopolyphosphatase activity) with the preference for short-chain-length substrates (P20-25). Might be involved in the regulation of dNTP and NTP pools, and in the turnover of 3'-mononucleotides produced by numerous intracellular RNases (T1, T2, and F) during the degradation of various RNAs. The chain is 5'/3'-nucleotidase SurE from Escherichia coli O127:H6 (strain E2348/69 / EPEC).